A 503-amino-acid polypeptide reads, in one-letter code: Probable apyrase 4 (503 aa).

The span at 1-14 (MQRSNARSRSNINS) shows a compositional bias: low complexity. Residues 1–39 (MQRSNARSRSNINSDMVDPPEVQTSPGNHRSSPSTAAKP) are disordered. Residues 1 to 45 (MQRSNARSRSNINSDMVDPPEVQTSPGNHRSSPSTAAKPKSKRTK) are Cytoplasmic-facing. A helical; Signal-anchor for type II membrane protein transmembrane segment spans residues 46–66 (SIIFVIVACVTIALGLLFIGY). The Extracellular segment spans residues 67-503 (SILRSGRNRR…DLSNVAKYKI (437 aa)). 83-93 (VIIDGGSSGTR) contributes to the ATP binding site. The active-site Proton acceptor is the E206. 230–240 (GIVELGGASAQ) provides a ligand contact to ATP. Residues N261, N293, and N338 are each glycosylated (N-linked (GlcNAc...) asparagine).

It belongs to the GDA1/CD39 NTPase family. It depends on Ca(2+) as a cofactor. As to expression, expressed both in the primary root and lateral root but not in the rosette leaves.

It localises to the membrane. It catalyses the reaction a ribonucleoside 5'-triphosphate + 2 H2O = a ribonucleoside 5'-phosphate + 2 phosphate + 2 H(+). In terms of biological role, catalyzes the hydrolysis of phosphoanhydride bonds of nucleoside tri- and di-phosphates. In Arabidopsis thaliana (Mouse-ear cress), this protein is Probable apyrase 4 (APY4).